We begin with the raw amino-acid sequence, 279 residues long: Tryptophan 2,3-dioxygenase (279 aa).

Substrate-binding positions include 48–52, Tyr110, and Arg114; that span reads FIIQH. His237 is a heme binding site. Thr251 contributes to the substrate binding site.

The protein belongs to the tryptophan 2,3-dioxygenase family. In terms of assembly, homotetramer. The cofactor is heme.

It carries out the reaction L-tryptophan + O2 = N-formyl-L-kynurenine. Its pathway is amino-acid degradation; L-tryptophan degradation via kynurenine pathway; L-kynurenine from L-tryptophan: step 1/2. Its function is as follows. Heme-dependent dioxygenase that catalyzes the oxidative cleavage of the L-tryptophan (L-Trp) pyrrole ring and converts L-tryptophan to N-formyl-L-kynurenine. Catalyzes the oxidative cleavage of the indole moiety. In Bradyrhizobium sp. (strain ORS 278), this protein is Tryptophan 2,3-dioxygenase.